Reading from the N-terminus, the 291-residue chain is Protease HtpX (291 aa).

2 consecutive transmembrane segments (helical) span residues 4 to 24 (IILF…ILSF) and 32 to 52 (ISGL…ISLL). Residue His-139 participates in Zn(2+) binding. Glu-140 is an active-site residue. His-143 contributes to the Zn(2+) binding site. Helical transmembrane passes span 158–178 (IVNT…SSIL) and 192–212 (WVYI…ASII). Glu-221 serves as a coordination point for Zn(2+).

The protein belongs to the peptidase M48B family. The cofactor is Zn(2+).

The protein resides in the cell membrane. The sequence is that of Protease HtpX from Buchnera aphidicola subsp. Baizongia pistaciae (strain Bp).